Here is a 274-residue protein sequence, read N- to C-terminus: Sulfur carrier protein FdhD (274 aa).

Cysteine 121 (cysteine persulfide intermediate) is an active-site residue. 258 to 263 (FSKPGR) lines the Mo-bis(molybdopterin guanine dinucleotide) pocket.

It belongs to the FdhD family.

It localises to the cytoplasm. Required for formate dehydrogenase (FDH) activity. Acts as a sulfur carrier protein that transfers sulfur from IscS to the molybdenum cofactor prior to its insertion into FDH. The sequence is that of Sulfur carrier protein FdhD from Yersinia pestis bv. Antiqua (strain Antiqua).